The primary structure comprises 35 residues: Cupiennin-2e (35 aa).

Glu-35 is subject to Glutamic acid 1-amide.

In terms of tissue distribution, expressed by the venom gland.

It localises to the secreted. The polypeptide is Cupiennin-2e (Cupiennius salei (American wandering spider)).